The chain runs to 144 residues: MRLNTISSAPGAKQAEKRVGRGIGSGWGKTCGRGHKGQKSRSGGFHKVGFEGGQMPLQRRVPKFGFSSRKARFRVEVRLDQLTKVNTDTVDIAALVKARLIPKWAKRVKVIASGKLDKPVSLQGIMVSAGARRAIEAAGGRIGE.

The segment at 1 to 52 (MRLNTISSAPGAKQAEKRVGRGIGSGWGKTCGRGHKGQKSRSGGFHKVGFEG) is disordered. Residues 21–31 (RGIGSGWGKTC) are compositionally biased toward gly residues.

This sequence belongs to the universal ribosomal protein uL15 family. In terms of assembly, part of the 50S ribosomal subunit.

Functionally, binds to the 23S rRNA. The polypeptide is Large ribosomal subunit protein uL15 (Nitrosococcus oceani (strain ATCC 19707 / BCRC 17464 / JCM 30415 / NCIMB 11848 / C-107)).